Consider the following 391-residue polypeptide: O-methyltransferase ATR12 (391 aa).

S-adenosyl-L-methionine-binding positions include 233 to 234 (GG), Asp259, and 279 to 280 (DF). The Proton acceptor role is filled by His299.

Belongs to the class I-like SAM-binding methyltransferase superfamily. Cation-independent O-methyltransferase family. COMT subfamily.

The protein operates within mycotoxin biosynthesis. Its function is as follows. O-methyltransferase; part of the core atranone cluster (CAC) which products are predicted to catalyze most or all steps of mycotoxin atranone synthesis, starting from geranylgeranyl pyrophosphate (GGPP). The initial cyclization of GGPP to dolabellane is probably performed by the terpene cyclase ATR13. The Baeyer-Villiger oxidation near the end of the atranone synthesis, which converts atranones D and E to atranones F and G is predicted to be catalyzed by the monooxygenase ATR8. Of the CAC's other predicted gene products, the reducing PKS ATR6 might synthesize a polyketide chain. This polyketide is probably transferred onto the atranone backbone by the polyketide transferase ATR5. Other predicted CAC products include 4 oxygenases (ATR2, ATR3, ATR4, and ATR14), 3 short-chain reductases (ATR7, ATR9, and ATR10), and a methyltransferase (ATR12). These may all be involved in the various steps of atranone biosynthesis, although their specific roles must await experimental determination. In Stachybotrys chlorohalonatus (strain IBT 40285), this protein is O-methyltransferase ATR12.